The sequence spans 258 residues: Ubiquinone/menaquinone biosynthesis C-methyltransferase UbiE (258 aa).

Residues 1–20 (MSESRTSADGGMETSYGFRE) form a disordered region. Residues threonine 81, aspartate 102, and 130–131 (NA) contribute to the S-adenosyl-L-methionine site.

This sequence belongs to the class I-like SAM-binding methyltransferase superfamily. MenG/UbiE family.

The catalysed reaction is a 2-demethylmenaquinol + S-adenosyl-L-methionine = a menaquinol + S-adenosyl-L-homocysteine + H(+). It carries out the reaction a 2-methoxy-6-(all-trans-polyprenyl)benzene-1,4-diol + S-adenosyl-L-methionine = a 5-methoxy-2-methyl-3-(all-trans-polyprenyl)benzene-1,4-diol + S-adenosyl-L-homocysteine + H(+). It functions in the pathway quinol/quinone metabolism; menaquinone biosynthesis; menaquinol from 1,4-dihydroxy-2-naphthoate: step 2/2. The protein operates within cofactor biosynthesis; ubiquinone biosynthesis. Its function is as follows. Methyltransferase required for the conversion of demethylmenaquinol (DMKH2) to menaquinol (MKH2) and the conversion of 2-polyprenyl-6-methoxy-1,4-benzoquinol (DDMQH2) to 2-polyprenyl-3-methyl-6-methoxy-1,4-benzoquinol (DMQH2). This is Ubiquinone/menaquinone biosynthesis C-methyltransferase UbiE from Rhizobium etli (strain CIAT 652).